A 511-amino-acid polypeptide reads, in one-letter code: 2,3-bisphosphoglycerate-independent phosphoglycerate mutase (511 aa).

A Mn(2+)-binding site is contributed by D12. Position 36 is a phosphotyrosine (Y36). S62 serves as a coordination point for Mn(2+). Residue S62 is the Phosphoserine intermediate of the active site. Residues H123, 153-154 (RD), R185, R191, 261-264 (RPDR), and K336 each bind substrate. D403, H407, D444, H445, and H462 together coordinate Mn(2+).

This sequence belongs to the BPG-independent phosphoglycerate mutase family. As to quaternary structure, monomer. Mn(2+) serves as cofactor.

The catalysed reaction is (2R)-2-phosphoglycerate = (2R)-3-phosphoglycerate. Its pathway is carbohydrate degradation; glycolysis; pyruvate from D-glyceraldehyde 3-phosphate: step 3/5. Could be inhibited during sporulation by acidification of the forespore, thus allowing accumulation of the spore's large depot of 3-phosphoglyceric acid. Its function is as follows. Essential for rapid growth and for sporulation. Catalyzes the interconversion of 2-phosphoglycerate (2-PGA) and 3-phosphoglycerate (3-PGA). The sequence is that of 2,3-bisphosphoglycerate-independent phosphoglycerate mutase from Geobacillus stearothermophilus (Bacillus stearothermophilus).